The primary structure comprises 570 residues: Proline--tRNA ligase (570 aa).

Belongs to the class-II aminoacyl-tRNA synthetase family. ProS type 1 subfamily. As to quaternary structure, homodimer.

Its subcellular location is the cytoplasm. The enzyme catalyses tRNA(Pro) + L-proline + ATP = L-prolyl-tRNA(Pro) + AMP + diphosphate. Its function is as follows. Catalyzes the attachment of proline to tRNA(Pro) in a two-step reaction: proline is first activated by ATP to form Pro-AMP and then transferred to the acceptor end of tRNA(Pro). As ProRS can inadvertently accommodate and process non-cognate amino acids such as alanine and cysteine, to avoid such errors it has two additional distinct editing activities against alanine. One activity is designated as 'pretransfer' editing and involves the tRNA(Pro)-independent hydrolysis of activated Ala-AMP. The other activity is designated 'posttransfer' editing and involves deacylation of mischarged Ala-tRNA(Pro). The misacylated Cys-tRNA(Pro) is not edited by ProRS. The sequence is that of Proline--tRNA ligase from Neisseria meningitidis serogroup C / serotype 2a (strain ATCC 700532 / DSM 15464 / FAM18).